The following is a 134-amino-acid chain: uncharacterized protein (134 aa).

The first 16 residues, 1–16, serve as a signal peptide directing secretion; it reads MAKAVALLLAAIAASA.

This is an uncharacterized protein from Oryza sativa subsp. indica (Rice).